The chain runs to 66 residues: uncharacterized protein (66 aa).

Positions 1-25 (MIVIILLFISIIVFLSVIQPQPSKN) are cleaved as a signal peptide. The segment covering 21 to 31 (QPSKNKSRQQA) has biased composition (polar residues). The interval 21–66 (QPSKNKSRQQADSGYFGYSDHSSHHDGCSSDGGFSDSGCGGGGGGD) is disordered.

This is an uncharacterized protein from Bacillus subtilis (strain 168).